Here is a 1960-residue protein sequence, read N- to C-terminus: MAQQAADKYLYVDKNFINNPLAQADWAAKKLVWVPSDKSGFEPASLKEEVGEEAIVELVENGKKVKVNKDDIQKMNPPKFSKVEDMAELTCLNEASVLHNLKERYYSGLIYTYSGLFCVVINPYKNLPIYSEEIVEMYKGKKRHEMPPHIYAITDTAYRSMMQDREDQSILCTGESGAGKTENTKKVIQYLAYVASSHKSKKDQGELERQLLQANPILEAFGNAKTVKNDNSSRFGKFIRINFDVNGYIVGANIETYLLEKSRAIRQAKEERTFHIFYYLLSGAGEHLKTDLLLEPYNKYRFLSNGHVTIPGQQDKDMFQETMEAMRIMGIPEEEQMGLLRVISGVLQLGNIVFKKERNTDQASMPDNTAAQKVSHLLGINVTDFTRGILTPRIKVGRDYVQKAQTKEQADFAIEALAKATYERMFRWLVLRINKALDKTKRQGASFIGILDIAGFEIFDLNSFEQLCINYTNEKLQQLFNHTMFILEQEEYQREGIEWNFIDFGLDLQPCIDLIEKPAGPPGILALLDEECWFPKATDKSFVEKVMQEQGTHPKFQKPKQLKDKADFCIIHYAGKVDYKADEWLMKNMDPLNDNIATLLHQSSDKFVSELWKDVDRIIGLDQVAGMSETALPGAFKTRKGMFRTVGQLYKEQLAKLMATLRNTNPNFVRCIIPNHEKKAGKLDPHLVLDQLRCNGVLEGIRICRQGFPNRVVFQEFRQRYEILTPNSIPKGFMDGKQACVLMIKALELDSNLYRIGQSKVFFRAGVLAHLEEERDLKITDVIIGFQACCRGYLARKAFAKRQQQLTAMKVLQRNCAAYLKLRNWQWWRLFTKVKPLLQVSRQEEEMMAKEEELVKVREKQLAAENRLTEMETLQSQLMAEKLQLQEQLQAETELCAEAEELRARLTAKKQELEEICHDLEARVEEEEERCQHLQAEKKKMQQNIQELEEQLEEEESARQKLQLEKVTTEAKLKKLEEEQIILEDQNCKLAKEKKLLEDRIAEFTTNLTEEEEKSKSLAKLKNKHEAMITDLEERLRREEKQRQELEKTRRKLEGDSTDLSDQIAELQAQIAELKMQLAKKEEELQAALARVEEEAAQKNMALKKIRELESQISELQEDLESERASRNKAEKQKRDLGEELEALKTELEDTLDSTAAQQELRSKREQEVNILKKTLEEEAKTHEAQIQEMRQKHSQAVEELAEQLEQTKRVKANLEKAKQTLENERGELANEVKVLLQGKGDSEHKRKKVEAQLQELQVKFNEGERVRTELADKVTKLQVELDNVTGLLSQSDSKSSKLTKDFSALESQLQDTQELLQEENRQKLSLSTKLKQVEDEKNSFREQLEEEEEAKHNLEKQIATLHAQVADMKKKMEDSVGCLETAEEVKRKLQKDLEGLSQRHEEKVAAYDKLEKTKTRLQQELDDLLVDLDHQRQSACNLEKKQKKFDQLLAEEKTISAKYAEERDRAEAEAREKETKALSLARALEEAMEQKAELERLNKQFRTEMEDLMSSKDDVGKSVHELEKSKRALEQQVEEMKTQLEELEDELQATEDAKLRLEVNLQAMKAQFERDLQGRDEQSEEKKKQLVRQVREMEAELEDERKQRSMAVAARKKLEMDLKDLEAHIDSANKNRDEAIKQLRKLQAQMKDCMRELDDTRASREEILAQAKENEKKLKSMEAEMIQLQEELAAAERAKRQAQQERDELADEIANSSGKGALALEEKRRLEARIAQLEEELEEEQGNTELINDRLKKANLQIDQINTDLNLERSHAQKNENARQQLERQNKELKVKLQEMEGTVKSKYKASITALEAKIAQLEEQLDNETKERQAACKQVRRTEKKLKDVLLQVDDERRNAEQYKDQADKASTRLKQLKRQLEEAEEEAQRANASRRKLQRELEDATETADAMNREVSSLKNKLRRGDLPFVVPRRMARKGAGDGSDEEVDGKADGAEAKPAE.

Alanine 2 is modified (N-acetylalanine). The mediates interaction with LIMCH1 stretch occupies residues 2–838; it reads AQQAADKYLY…RLFTKVKPLL (837 aa). Lysine 8 bears the N6-acetyllysine mark. Phosphotyrosine is present on tyrosine 11. The Myosin N-terminal SH3-like domain maps to 27-77; sequence AAKKLVWVPSDKSGFEPASLKEEVGEEAIVELVENGKKVKVNKDDIQKMNP. The Myosin motor domain occupies 81–776; it reads SKVEDMAELT…VLAHLEEERD (696 aa). Lysine 102 carries the N6-acetyllysine modification. Residue 174–181 coordinates ATP; sequence GESGAGKT. 3 positions are modified to N6-acetyllysine: lysine 299, lysine 435, and lysine 613. At serine 628 the chain carries Phosphoserine. The tract at residues 654-676 is actin-binding; that stretch reads LAKLMATLRNTNPNFVRCIIPNH. Tyrosine 754 is modified (phosphotyrosine). The IQ domain occupies 779–808; that stretch reads ITDVIIGFQACCRGYLARKAFAKRQQQLTA. A coiled-coil region spans residues 837–1926; that stretch reads LLQVSRQEEE…LKNKLRRGDL (1090 aa). Lysine 850 carries the N6-succinyllysine modification. N6-acetyllysine is present on residues lysine 860, lysine 975, and lysine 1024. A compositionally biased stretch (basic and acidic residues) spans 1035–1055; that stretch reads RLRREEKQRQELEKTRRKLEG. Residues 1035–1057 are disordered; sequence RLRREEKQRQELEKTRRKLEGDS. Residue serine 1114 is modified to Phosphoserine. The disordered stretch occupies residues 1118–1137; the sequence is EDLESERASRNKAEKQKRDL. Positions 1122–1137 are enriched in basic and acidic residues; it reads SERASRNKAEKQKRDL. 8 positions are modified to N6-acetyllysine: lysine 1234, lysine 1249, lysine 1357, lysine 1392, lysine 1404, lysine 1410, lysine 1459, and lysine 1638. Lysine 1669 is subject to N6-succinyllysine. A Phosphoserine modification is found at serine 1714. N6-acetyllysine is present on residues lysine 1793, lysine 1802, and lysine 1845. The tract at residues 1877–1960 is disordered; that stretch reads RQLEEAEEEA…ADGAEAKPAE (84 aa). Arginine 1923 carries the omega-N-methylarginine modification. Serine 1943 bears the Phosphoserine mark. A compositionally biased stretch (basic and acidic residues) spans 1948 to 1960; that stretch reads DGKADGAEAKPAE.

The protein belongs to the TRAFAC class myosin-kinesin ATPase superfamily. Myosin family. In terms of assembly, myosin is a hexameric protein that consists of 2 heavy chain subunits (MHC), 2 alkali light chain subunits (MLC) and 2 regulatory light chain subunits (MLC-2). Interacts with RASIP1. Interacts with DDR1. Interacts with PDLIM2. Interacts with SVIL. Interacts with HTRA3. Interacts with Myo7a. Interacts with CFAP95. Interacts with LIMCH1; independently of the integration of MYH9 into the myosin complex. Interacts with RAB3A. Interacts with ZBED4. Interacts with S100A4; this interaction increases cell motility. As to quaternary structure, (Microbial infection) Interacts with herpes simplex virus 1/HHV-1 envelope glycoprotein B. ISGylated. In terms of processing, ubiquitination. In terms of tissue distribution, in the kidney, expressed in the glomeruli. Also expressed in leukocytes.

The protein localises to the cytoplasm. It localises to the cytoskeleton. Its subcellular location is the cell cortex. The protein resides in the cytoplasmic vesicle. It is found in the secretory vesicle. The protein localises to the cortical granule. It localises to the cell membrane. Cellular myosin that appears to play a role in cytokinesis, cell shape, and specialized functions such as secretion and capping. Required for cortical actin clearance prior to oocyte exocytosis. Promotes cell motility in conjunction with S100A4. During cell spreading, plays an important role in cytoskeleton reorganization, focal contact formation (in the margins but not the central part of spreading cells), and lamellipodial retraction; this function is mechanically antagonized by MYH10. In terms of biological role, (Microbial infection) Acts as a receptor for herpes simplex virus 1/HHV-1 envelope glycoprotein B. The chain is Myosin-9 (MYH9) from Homo sapiens (Human).